Consider the following 415-residue polypeptide: uncharacterized protein (415 aa).

2 disordered regions span residues 329-351 and 388-415; these read KFNK…TESS and KSMM…IITL. Residues 338 to 348 are compositionally biased toward acidic residues; that stretch reads LQNESGDDSET. Positions 399–409 are enriched in basic residues; it reads KSNRKSNKRSN.

This is an uncharacterized protein from Acanthamoeba polyphaga mimivirus (APMV).